A 338-amino-acid polypeptide reads, in one-letter code: Aspartate-semialdehyde dehydrogenase (338 aa).

NADP(+) is bound by residues 9–12 (TGQV) and 37–38 (RS). Residue arginine 93 coordinates phosphate. Cysteine 123 (acyl-thioester intermediate) is an active-site residue. Glutamine 150 provides a ligand contact to substrate. 153 to 154 (SG) contacts NADP(+). Residue lysine 220 coordinates phosphate. Position 242 (arginine 242) interacts with substrate. The active-site Proton acceptor is histidine 249. Position 316 (asparagine 316) interacts with NADP(+).

It belongs to the aspartate-semialdehyde dehydrogenase family. As to quaternary structure, homodimer.

It carries out the reaction L-aspartate 4-semialdehyde + phosphate + NADP(+) = 4-phospho-L-aspartate + NADPH + H(+). It functions in the pathway amino-acid biosynthesis; L-lysine biosynthesis via DAP pathway; (S)-tetrahydrodipicolinate from L-aspartate: step 2/4. The protein operates within amino-acid biosynthesis; L-methionine biosynthesis via de novo pathway; L-homoserine from L-aspartate: step 2/3. Its pathway is amino-acid biosynthesis; L-threonine biosynthesis; L-threonine from L-aspartate: step 2/5. Functionally, catalyzes the NADPH-dependent formation of L-aspartate-semialdehyde (L-ASA) by the reductive dephosphorylation of L-aspartyl-4-phosphate. This is Aspartate-semialdehyde dehydrogenase from Streptomyces akiyoshiensis.